The sequence spans 465 residues: Glutamyl-tRNA reductase 2 (465 aa).

Residues T62–R65, S122, E127–Q129, and Q133 each bind substrate. C63 serves as the catalytic Nucleophile. G204–G209 serves as a coordination point for NADP(+).

It belongs to the glutamyl-tRNA reductase family.

Its subcellular location is the plastid. The protein localises to the chloroplast. The catalysed reaction is (S)-4-amino-5-oxopentanoate + tRNA(Glu) + NADP(+) = L-glutamyl-tRNA(Glu) + NADPH + H(+). The protein operates within porphyrin-containing compound metabolism; protoporphyrin-IX biosynthesis; 5-aminolevulinate from L-glutamyl-tRNA(Glu): step 1/2. Functionally, catalyzes the NADPH-dependent reduction of glutamyl-tRNA(Glu) to glutamate 1-semialdehyde (GSA). The polypeptide is Glutamyl-tRNA reductase 2 (HEMA2) (Hordeum vulgare (Barley)).